Here is a 177-residue protein sequence, read N- to C-terminus: Protein C (177 aa).

The segment covering 1–10 (MSTKAWNASR) has biased composition (polar residues). The tract at residues 1–38 (MSTKAWNASRLSGPDPSTPWSLRKPLQHGSRPPKGKRL) is disordered.

It belongs to the morbillivirus protein C family.

In Rinderpest virus (strain RBOK) (RDV), this protein is Protein C (P/V/C).